We begin with the raw amino-acid sequence, 1107 residues long: Rho GTPase-activating protein 39 (1107 aa).

A disordered region spans residues 1–21; the sequence is MSQAQDYECRSHHVDEQEPRI. Ser2 carries the post-translational modification N-acetylserine. Positions 7–19 are enriched in basic and acidic residues; it reads YECRSHHVDEQEP. WW domains are found at residues 25-58 and 63-97; these read STRL…PPAG and RTSE…RPQN. The span at 111–122 shows a compositional bias: polar residues; it reads QNTESPRASADN. 4 disordered regions span residues 111-173, 218-267, 282-311, and 326-370; these read QNTE…PPGV, PSFL…PERR, SPLL…LYEE, and MDVQ…LMRT. Residues 123 to 136 are compositionally biased toward low complexity; that stretch reads SPGRGSRDGSTGSS. Residues 242–254 are compositionally biased toward polar residues; it reads SGSQHSPNLQTFV. Ser282 is subject to Phosphoserine. Composition is skewed to polar residues over residues 331-343 and 353-369; these read EANS…SPQR and LQTT…QLMR. A phosphoserine mark is found at Ser380, Ser384, Ser402, and Ser403. Disordered regions lie at residues 404-429, 441-529, and 563-585; these read PKLR…QPSP, SGDY…RASL, and MKQR…GAVP. Residues 470-484 are compositionally biased toward polar residues; the sequence is SWSSQQDTMSSTGYS. Ser597, Ser683, Ser708, and Ser719 each carry phosphoserine. A MyTH4 domain is found at 715–867; sequence WSSESIKKPM…PYVEEPDGVA (153 aa). The region spanning 914–1102 is the Rho-GAP domain; the sequence is SALQEVMSMQ…VLIQHLDTSF (189 aa).

The protein resides in the nucleus. The chain is Rho GTPase-activating protein 39 (Arhgap39) from Mus musculus (Mouse).